The sequence spans 194 residues: Ribose 1,5-bisphosphate phosphokinase PhnN (194 aa).

24 to 31 (GPSGAGKD) contributes to the ATP binding site.

Belongs to the ribose 1,5-bisphosphokinase family.

The catalysed reaction is alpha-D-ribose 1,5-bisphosphate + ATP = 5-phospho-alpha-D-ribose 1-diphosphate + ADP. It participates in metabolic intermediate biosynthesis; 5-phospho-alpha-D-ribose 1-diphosphate biosynthesis; 5-phospho-alpha-D-ribose 1-diphosphate from D-ribose 5-phosphate (route II): step 3/3. Catalyzes the phosphorylation of ribose 1,5-bisphosphate to 5-phospho-D-ribosyl alpha-1-diphosphate (PRPP). The polypeptide is Ribose 1,5-bisphosphate phosphokinase PhnN (Rhodopseudomonas palustris (strain ATCC BAA-98 / CGA009)).